Consider the following 126-residue polypeptide: Small ribosomal subunit protein uS13 (126 aa).

The disordered stretch occupies residues 93–126 (RRGLPVRGQRTKTNARTRKGPKRTVAGKKKAGRK).

It belongs to the universal ribosomal protein uS13 family. In terms of assembly, part of the 30S ribosomal subunit. Forms a loose heterodimer with protein S19. Forms two bridges to the 50S subunit in the 70S ribosome.

Functionally, located at the top of the head of the 30S subunit, it contacts several helices of the 16S rRNA. In the 70S ribosome it contacts the 23S rRNA (bridge B1a) and protein L5 of the 50S subunit (bridge B1b), connecting the 2 subunits; these bridges are implicated in subunit movement. Contacts the tRNAs in the A and P-sites. The sequence is that of Small ribosomal subunit protein uS13 from Beutenbergia cavernae (strain ATCC BAA-8 / DSM 12333 / CCUG 43141 / JCM 11478 / NBRC 16432 / NCIMB 13614 / HKI 0122).